An 810-amino-acid chain; its full sequence is Protein kinase C-binding protein NELL1 (810 aa).

An N-terminal signal peptide occupies residues 1–21 (MPMDVILVLWFCVCTARTVLG). Residues Asn-40, Asn-53, Asn-83, Asn-224, Asn-294, and Asn-372 are each glycosylated (N-linked (GlcNAc...) asparagine). Residues 57 to 227 (AFLFQDVQRE…TQCPNLNRTC (171 aa)) enclose the Laminin G-like domain. The VWFC 1 domain occupies 271-332 (KTCQVSGLLY…ISGQCCKVCR (62 aa)). 3 disulfides stabilise this stretch: Cys-395–Cys-407, Cys-401–Cys-416, and Cys-418–Cys-432. Residues Asp-434, Ile-435, and Glu-437 each contribute to the Ca(2+) site. Residues 434–475 (DIDECAAKMHYCHANTVCVNLPGLYRCDCVPGYIRVDDFSCT) enclose the EGF-like 1; calcium-binding domain. 15 cysteine pairs are disulfide-bonded: Cys-438–Cys-451, Cys-445–Cys-460, Cys-462–Cys-474, Cys-480–Cys-493, Cys-487–Cys-502, Cys-504–Cys-515, Cys-519–Cys-529, Cys-523–Cys-535, Cys-537–Cys-546, Cys-553–Cys-566, Cys-560–Cys-575, Cys-577–Cys-594, Cys-600–Cys-613, Cys-607–Cys-622, and Cys-624–Cys-630. Residues Asn-453, Leu-454, and Leu-457 each coordinate Ca(2+). An EGF-like 2; calcium-binding domain is found at 476 to 516 (EHDDCGSGQHNCDKNAICTNTVQGHSCTCQPGYVGNGTICK). Asn-511 carries N-linked (GlcNAc...) asparagine glycosylation. In terms of domain architecture, EGF-like 3 spans 517-547 (AFCEEGCRYGGTCVAPNKCVCPSGFTGSHCE). Residues 549–587 (DIDECAEGFVECHNHSRCVNLPGWYHCECRSGFHDDGTY) form the EGF-like 4; calcium-binding domain. An N-linked (GlcNAc...) asparagine glycan is attached at Asn-562. One can recognise an EGF-like 5; calcium-binding domain in the interval 596-631 (DIDECALRTHTCWNDSACINLAGGFDCLCPSGPSCS). A glycan (N-linked (GlcNAc...) asparagine) is linked at Asn-609. VWFC domains lie at 632 to 687 (GDCP…PECD) and 692 to 750 (SQCL…PRCV). Asn-708 carries N-linked (GlcNAc...) asparagine glycosylation.

As to quaternary structure, interacts with ATRAID; the interaction promotes osteoblast cell differentiation and mineralization. Homotrimer. Binds to PKC beta-1. Interacts with ROBO3.

The protein localises to the cytoplasm. It is found in the nucleus envelope. The protein resides in the secreted. Functionally, plays a role in the control of cell growth and differentiation. Promotes osteoblast cell differentiation and terminal mineralization. This Rattus norvegicus (Rat) protein is Protein kinase C-binding protein NELL1 (Nell1).